Reading from the N-terminus, the 195-residue chain is MRAVVSLAVVFVLSYLLGSLVAGVLYSRGRGEDIRGRDLPGGSGTYRQYGKGAAAAVTLADILKGAAAVGLALWLAPQALPLATALATFGVVFGHCYPVWFGFRGGGGIAPFLGAMLVVAPWTLLATVTFALALIPLYRATLQPRLRLNAIPFATVVAVPVGLLIASRLGGGAEFLAGSAAMGIRAVHLLAEQRA.

The next 6 helical transmembrane spans lie at 4–24 (VVSL…VAGV), 52–72 (GAAA…VGLA), 73–93 (LWLA…GVVF), 115–135 (AMLV…LALI), 150–170 (AIPF…SRLG), and 171–191 (GGAE…HLLA).

It belongs to the PlsY family. As to quaternary structure, probably interacts with PlsX.

The protein localises to the cell membrane. It catalyses the reaction an acyl phosphate + sn-glycerol 3-phosphate = a 1-acyl-sn-glycero-3-phosphate + phosphate. Its pathway is lipid metabolism; phospholipid metabolism. Its function is as follows. Catalyzes the transfer of an acyl group from acyl-phosphate (acyl-PO(4)) to glycerol-3-phosphate (G3P) to form lysophosphatidic acid (LPA). This enzyme utilizes acyl-phosphate as fatty acyl donor, but not acyl-CoA or acyl-ACP. This is Glycerol-3-phosphate acyltransferase 2 from Deinococcus radiodurans (strain ATCC 13939 / DSM 20539 / JCM 16871 / CCUG 27074 / LMG 4051 / NBRC 15346 / NCIMB 9279 / VKM B-1422 / R1).